We begin with the raw amino-acid sequence, 204 residues long: Thymidylate kinase (204 aa).

11–18 contacts ATP; it reads GLDKSGKT.

Belongs to the thymidylate kinase family.

It catalyses the reaction dTMP + ATP = dTDP + ADP. It functions in the pathway pyrimidine metabolism; dTTP biosynthesis. This Cowpox virus (strain GRI-90 / Grishak) (CPV) protein is Thymidylate kinase (TMK).